The following is a 245-amino-acid chain: 1-(5-phosphoribosyl)-5-[(5-phosphoribosylamino)methylideneamino] imidazole-4-carboxamide isomerase (245 aa).

Catalysis depends on Asp-7, which acts as the Proton acceptor. The active-site Proton donor is Asp-129.

The protein belongs to the HisA/HisF family.

The protein localises to the cytoplasm. The enzyme catalyses 1-(5-phospho-beta-D-ribosyl)-5-[(5-phospho-beta-D-ribosylamino)methylideneamino]imidazole-4-carboxamide = 5-[(5-phospho-1-deoxy-D-ribulos-1-ylimino)methylamino]-1-(5-phospho-beta-D-ribosyl)imidazole-4-carboxamide. It functions in the pathway amino-acid biosynthesis; L-histidine biosynthesis; L-histidine from 5-phospho-alpha-D-ribose 1-diphosphate: step 4/9. This chain is 1-(5-phosphoribosyl)-5-[(5-phosphoribosylamino)methylideneamino] imidazole-4-carboxamide isomerase, found in Shewanella putrefaciens (strain CN-32 / ATCC BAA-453).